The chain runs to 153 residues: 6,7-dimethyl-8-ribityllumazine synthase (153 aa).

Residues phenylalanine 22, 56 to 58, and 80 to 82 each bind 5-amino-6-(D-ribitylamino)uracil; these read AFE and TVI. Residue 85–86 participates in (2S)-2-hydroxy-3-oxobutyl phosphate binding; sequence ST. Histidine 88 acts as the Proton donor in catalysis. Phenylalanine 113 serves as a coordination point for 5-amino-6-(D-ribitylamino)uracil. Arginine 127 lines the (2S)-2-hydroxy-3-oxobutyl phosphate pocket.

The protein belongs to the DMRL synthase family. As to quaternary structure, forms an icosahedral capsid composed of 60 subunits, arranged as a dodecamer of pentamers.

It catalyses the reaction (2S)-2-hydroxy-3-oxobutyl phosphate + 5-amino-6-(D-ribitylamino)uracil = 6,7-dimethyl-8-(1-D-ribityl)lumazine + phosphate + 2 H2O + H(+). The protein operates within cofactor biosynthesis; riboflavin biosynthesis; riboflavin from 2-hydroxy-3-oxobutyl phosphate and 5-amino-6-(D-ribitylamino)uracil: step 1/2. Catalyzes the formation of 6,7-dimethyl-8-ribityllumazine by condensation of 5-amino-6-(D-ribitylamino)uracil with 3,4-dihydroxy-2-butanone 4-phosphate. This is the penultimate step in the biosynthesis of riboflavin. This chain is 6,7-dimethyl-8-ribityllumazine synthase, found in Haemophilus ducreyi (strain 35000HP / ATCC 700724).